Consider the following 1171-residue polypeptide: Pesticidal crystal protein Cry1Ea (1171 aa).

Positions 1094–1124 are disordered; sequence ESNSSVHASVYEEKSYTDRRRENPCESNRGY. Residues 1103-1117 show a composition bias toward basic and acidic residues; sequence VYEEKSYTDRRRENP.

Belongs to the delta endotoxin family.

Its function is as follows. Promotes colloidosmotic lysis by binding to the midgut epithelial cells of many lepidopteran larvae including Spodoptera species. This Bacillus thuringiensis subsp. kenyae protein is Pesticidal crystal protein Cry1Ea (cry1Ea).